Here is a 289-residue protein sequence, read N- to C-terminus: Phosphatidylserine decarboxylase proenzyme (289 aa).

Active-site charge relay system; for autoendoproteolytic cleavage activity residues include Asp89, His146, and Ser252. The Schiff-base intermediate with substrate; via pyruvic acid; for decarboxylase activity role is filled by Ser252. Ser252 is subject to Pyruvic acid (Ser); by autocatalysis.

Belongs to the phosphatidylserine decarboxylase family. PSD-B subfamily. Prokaryotic type I sub-subfamily. In terms of assembly, heterodimer of a large membrane-associated beta subunit and a small pyruvoyl-containing alpha subunit. Pyruvate serves as cofactor. Post-translationally, is synthesized initially as an inactive proenzyme. Formation of the active enzyme involves a self-maturation process in which the active site pyruvoyl group is generated from an internal serine residue via an autocatalytic post-translational modification. Two non-identical subunits are generated from the proenzyme in this reaction, and the pyruvate is formed at the N-terminus of the alpha chain, which is derived from the carboxyl end of the proenzyme. The autoendoproteolytic cleavage occurs by a canonical serine protease mechanism, in which the side chain hydroxyl group of the serine supplies its oxygen atom to form the C-terminus of the beta chain, while the remainder of the serine residue undergoes an oxidative deamination to produce ammonia and the pyruvoyl prosthetic group on the alpha chain. During this reaction, the Ser that is part of the protease active site of the proenzyme becomes the pyruvoyl prosthetic group, which constitutes an essential element of the active site of the mature decarboxylase.

It is found in the cell membrane. The catalysed reaction is a 1,2-diacyl-sn-glycero-3-phospho-L-serine + H(+) = a 1,2-diacyl-sn-glycero-3-phosphoethanolamine + CO2. It functions in the pathway phospholipid metabolism; phosphatidylethanolamine biosynthesis; phosphatidylethanolamine from CDP-diacylglycerol: step 2/2. Catalyzes the formation of phosphatidylethanolamine (PtdEtn) from phosphatidylserine (PtdSer). This is Phosphatidylserine decarboxylase proenzyme from Shewanella denitrificans (strain OS217 / ATCC BAA-1090 / DSM 15013).